We begin with the raw amino-acid sequence, 471 residues long: Uronate isomerase (471 aa).

Belongs to the metallo-dependent hydrolases superfamily. Uronate isomerase family.

It carries out the reaction D-glucuronate = D-fructuronate. It catalyses the reaction aldehydo-D-galacturonate = keto-D-tagaturonate. The protein operates within carbohydrate metabolism; pentose and glucuronate interconversion. This chain is Uronate isomerase, found in Xanthomonas campestris pv. campestris (strain B100).